A 443-amino-acid chain; its full sequence is NADH-ubiquinone oxidoreductase chain 4 (443 aa).

Helical transmembrane passes span 1–21, 27–47, 71–91, 93–113, 114–134, 148–168, 187–207, 217–237, 247–267, 279–299, 308–328, 335–355, 362–382, 385–405, and 423–443; these read MFISVLLILFALCVTLIPEAH, VWSFVATIIPMWVVTWMWWNF, GVALSLMLLTTVLFPICMMLL, TVAGFMTFILLEVLVLSALCV, LDLLGFYILFEASLILLFLLI, IVLYTMAGSLVLLPTLFMIYS, VLGWGLLAVLAVKIPLMPVHL, PTAGSVLLAGVLLKLGGIGFL, FCVSVFPLVSTLCLVSFLFST, IVAYSSIAHMSMVTLAIFSQS, FLMIAHGLISPALFLIVGILY, FILYFSGLGASMPIGSTLFFL, AFPLFPNFIAEVLCMVSIFAV, LLAYVFCVCQVLGAAYGFWAF, and EFHTVLPLLIGAVWLGIKPMA.

It belongs to the complex I subunit 4 family.

Its subcellular location is the mitochondrion membrane. It catalyses the reaction a ubiquinone + NADH + 5 H(+)(in) = a ubiquinol + NAD(+) + 4 H(+)(out). Functionally, core subunit of the mitochondrial membrane respiratory chain NADH dehydrogenase (Complex I) that is believed to belong to the minimal assembly required for catalysis. Complex I functions in the transfer of electrons from NADH to the respiratory chain. The immediate electron acceptor for the enzyme is believed to be ubiquinone. This is NADH-ubiquinone oxidoreductase chain 4 (ND4) from Chlamydomonas reinhardtii (Chlamydomonas smithii).